Here is a 290-residue protein sequence, read N- to C-terminus: Light-independent protochlorophyllide reductase iron-sulfur ATP-binding protein (290 aa).

Residues 10–15 and K39 contribute to the ATP site; that span reads GIGKST. Position 14 (S14) interacts with Mg(2+). [4Fe-4S] cluster-binding residues include C95 and C129. An ATP-binding site is contributed by 180 to 181; the sequence is NR.

It belongs to the NifH/BchL/ChlL family. In terms of assembly, homodimer. Protochlorophyllide reductase is composed of three subunits; ChlL, ChlN and ChlB. Requires [4Fe-4S] cluster as cofactor.

It is found in the plastid. The protein localises to the chloroplast. The catalysed reaction is chlorophyllide a + oxidized 2[4Fe-4S]-[ferredoxin] + 2 ADP + 2 phosphate = protochlorophyllide a + reduced 2[4Fe-4S]-[ferredoxin] + 2 ATP + 2 H2O. Its pathway is porphyrin-containing compound metabolism; chlorophyll biosynthesis (light-independent). In terms of biological role, component of the dark-operative protochlorophyllide reductase (DPOR) that uses Mg-ATP and reduced ferredoxin to reduce ring D of protochlorophyllide (Pchlide) to form chlorophyllide a (Chlide). This reaction is light-independent. The L component serves as a unique electron donor to the NB-component of the complex, and binds Mg-ATP. This Porphyra purpurea (Red seaweed) protein is Light-independent protochlorophyllide reductase iron-sulfur ATP-binding protein.